The following is a 387-amino-acid chain: Putative serine/threonine-protein kinase (387 aa).

One can recognise a Protein kinase domain in the interval 15–344 (YQIEKLLNRG…ERVLEGQVEI (330 aa)). ATP contacts are provided by residues 21-29 (LNRGGMDSY) and Lys-55. Catalysis depends on Asp-164, which acts as the Proton acceptor. Transmembrane regions (helical) follow at residues 232 to 252 (PPNAQYDIYSLGIILFEMLVG) and 363 to 383 (SIFTIVFIGLIIAAIVLLLIF).

The protein belongs to the protein kinase superfamily. Ser/Thr protein kinase family.

It is found in the cell membrane. It catalyses the reaction L-seryl-[protein] + ATP = O-phospho-L-seryl-[protein] + ADP + H(+). The enzyme catalyses L-threonyl-[protein] + ATP = O-phospho-L-threonyl-[protein] + ADP + H(+). This is Putative serine/threonine-protein kinase from Mycoplasma genitalium (strain ATCC 33530 / DSM 19775 / NCTC 10195 / G37) (Mycoplasmoides genitalium).